The following is a 199-amino-acid chain: Recombination protein RecR (199 aa).

A C4-type zinc finger spans residues Cys-57–Cys-72. Residues Asp-81–Pro-176 enclose the Toprim domain.

Belongs to the RecR family.

In terms of biological role, may play a role in DNA repair. It seems to be involved in an RecBC-independent recombinational process of DNA repair. It may act with RecF and RecO. The polypeptide is Recombination protein RecR (Shewanella halifaxensis (strain HAW-EB4)).